Reading from the N-terminus, the 349-residue chain is Secondary metabolism regulator LAE1 (349 aa).

The tract at residues 1-46 (MSSRNAPSGCVAPSPATAAPPSPTNLRLTVGQSGSESANEPGGEPE) is disordered. The span at 25-38 (NLRLTVGQSGSESA) shows a compositional bias: polar residues.

The protein belongs to the methyltransferase superfamily. LaeA methyltransferase family. As to quaternary structure, component of the heterotrimeric velvet complex composed of LAE1, VEL1 and VEL2; VEL1 acting as a bridging protein between LAE1 and VEL2.

It localises to the nucleus. The enzyme catalyses L-methionyl-[protein] + S-adenosyl-L-methionine = S-methyl-L-methionyl-[protein] + S-adenosyl-L-homocysteine. Its function is as follows. Methyltransferase that performs automethylation. No other methyl-accepting substrate has been identified yet. Component of the velvet transcription factor complex that acts as a global regulator for secondary metabolite gene expression. Controls the expression of the gamma-pentyl-pyrone gene clusters. Required for the expression of cellulase. Regulates asexual sporulation (conidiation) by environmental stimuli such as light and/or mechanical injury. Required for oxidative stress tolerance. Also plays a role in defense and parasitism on other fungi. This is Secondary metabolism regulator LAE1 from Hypocrea atroviridis (strain ATCC 20476 / IMI 206040) (Trichoderma atroviride).